The primary structure comprises 221 residues: Thyrotroph embryonic factor (221 aa).

Residues 72-116 (ESASSSTASPPSSSTAVFQPSETVSSTESSLEKERETPSPIDPNC) are disordered. Low complexity predominate over residues 73 to 100 (SASSSTASPPSSSTAVFQPSETVSSTES). Residues 173-221 (DEKYWTRRKKNNVAAKRSRDARRLKENQITIRAAFLEKENTALRTEVAD) form the bZIP domain. The segment at 175-195 (KYWTRRKKNNVAAKRSRDARR) is basic motif. Residues 196-203 (LKENQITI) form a leucine-zipper region.

It belongs to the bZIP family. PAR subfamily. Binds DNA as a homodimer or a heterodimer. Can form a heterodimer with DBP.

The protein resides in the nucleus. Its function is as follows. Transcription factor that binds to and transactivates the TSHB promoter. Binds to a minimal DNA-binding sequence 5'-[TC][AG][AG]TTA[TC][AG]-3'. This is Thyrotroph embryonic factor (TEF) from Phodopus sungorus (Striped hairy-footed hamster).